Here is a 223-residue protein sequence, read N- to C-terminus: Phosphoribosylformylglycinamidine synthase subunit PurQ (223 aa).

A Glutamine amidotransferase type-1 domain is found at 3-223 (FAVLVFPGSN…MVKSWREQHV (221 aa)). Cys-85 (nucleophile) is an active-site residue. Active-site residues include His-193 and Glu-195.

In terms of assembly, part of the FGAM synthase complex composed of 1 PurL, 1 PurQ and 2 PurS subunits.

The protein localises to the cytoplasm. It catalyses the reaction N(2)-formyl-N(1)-(5-phospho-beta-D-ribosyl)glycinamide + L-glutamine + ATP + H2O = 2-formamido-N(1)-(5-O-phospho-beta-D-ribosyl)acetamidine + L-glutamate + ADP + phosphate + H(+). The enzyme catalyses L-glutamine + H2O = L-glutamate + NH4(+). It participates in purine metabolism; IMP biosynthesis via de novo pathway; 5-amino-1-(5-phospho-D-ribosyl)imidazole from N(2)-formyl-N(1)-(5-phospho-D-ribosyl)glycinamide: step 1/2. Part of the phosphoribosylformylglycinamidine synthase complex involved in the purines biosynthetic pathway. Catalyzes the ATP-dependent conversion of formylglycinamide ribonucleotide (FGAR) and glutamine to yield formylglycinamidine ribonucleotide (FGAM) and glutamate. The FGAM synthase complex is composed of three subunits. PurQ produces an ammonia molecule by converting glutamine to glutamate. PurL transfers the ammonia molecule to FGAR to form FGAM in an ATP-dependent manner. PurS interacts with PurQ and PurL and is thought to assist in the transfer of the ammonia molecule from PurQ to PurL. This is Phosphoribosylformylglycinamidine synthase subunit PurQ from Staphylococcus aureus (strain USA300).